An 833-amino-acid chain; its full sequence is Major vault protein (833 aa).

8 MVP repeats span residues 10 to 52, 54 to 115, 119 to 170, 171 to 223, 224 to 278, 280 to 328, 329 to 380, and 381 to 433; these read RYYY…VSVP, RHYC…RKLQ, PNTG…TVIY, PNTA…TMLS, ELKA…VSLN, KEYV…LVVG, KEEA…MALD, and RNEG…SIKT.

In terms of assembly, the vault ribonucleoprotein particle is a huge (400 A x 670 A) cage structure of 12.9 MDa. It consists of a dimer of half-vaults, with each half-vault comprising 39 identical major vault protein (MVP) chains, PARP4 and one or more vault RNAs (vRNAs).

The protein localises to the cytoplasm. It is found in the nucleus. Required for normal vault structure. Vaults are multi-subunit structures that may act as scaffolds for proteins involved in signal transduction. Vaults may also play a role in nucleo-cytoplasmic transport. The sequence is that of Major vault protein from Leishmania braziliensis.